The primary structure comprises 435 residues: Enolase (435 aa).

Substrate contacts are provided by histidine 155 and glutamate 164. The active-site Proton donor is the glutamate 205. The Mg(2+) site is built by aspartate 243, glutamate 292, and aspartate 319. Substrate-binding positions include glutamate 292, aspartate 319, lysine 344, 371–374 (SHRS), and lysine 395. Residue lysine 344 is the Proton acceptor of the active site.

It belongs to the enolase family. As to quaternary structure, homooctamer. The cofactor is Mg(2+).

Its subcellular location is the cytoplasm. It localises to the secreted. The protein localises to the cell surface. The enzyme catalyses (2R)-2-phosphoglycerate = phosphoenolpyruvate + H2O. Its pathway is carbohydrate degradation; glycolysis; pyruvate from D-glyceraldehyde 3-phosphate: step 4/5. Its function is as follows. Catalyzes the reversible conversion of 2-phosphoglycerate (2-PG) into phosphoenolpyruvate (PEP). It is essential for the degradation of carbohydrates via glycolysis. Functionally, 'Moonlights' as a plasminogen receptor and plasmin activator. Binds host (human) plasminogen in vitro; enhances the activity of host tissue-specific plasminogen activator (tPA). The chain is Enolase from Streptococcus pyogenes serotype M1.